A 344-amino-acid chain; its full sequence is Fructose-bisphosphate aldolase (344 aa).

Ser-53 contributes to the D-glyceraldehyde 3-phosphate binding site. Asp-95 (proton donor) is an active-site residue. Residues His-96, Asp-131, Glu-161, and His-212 each coordinate Zn(2+). Gly-213 is a dihydroxyacetone phosphate binding site. His-252 provides a ligand contact to Zn(2+). Residues 253 to 255 and 274 to 277 each bind dihydroxyacetone phosphate; these read GGS and NVDT.

It belongs to the class II fructose-bisphosphate aldolase family. Zn(2+) is required as a cofactor.

The catalysed reaction is beta-D-fructose 1,6-bisphosphate = D-glyceraldehyde 3-phosphate + dihydroxyacetone phosphate. It functions in the pathway carbohydrate degradation; glycolysis; D-glyceraldehyde 3-phosphate and glycerone phosphate from D-glucose: step 4/4. Catalyzes the aldol condensation of dihydroxyacetone phosphate (DHAP or glycerone-phosphate) with glyceraldehyde 3-phosphate (G3P) to form fructose 1,6-bisphosphate (FBP) in gluconeogenesis and the reverse reaction in glycolysis. The sequence is that of Fructose-bisphosphate aldolase (fba) from Corynebacterium glutamicum (strain ATCC 13032 / DSM 20300 / JCM 1318 / BCRC 11384 / CCUG 27702 / LMG 3730 / NBRC 12168 / NCIMB 10025 / NRRL B-2784 / 534).